The following is a 107-amino-acid chain: NADH-quinone oxidoreductase subunit K (107 aa).

Transmembrane regions (helical) follow at residues 11-31 (LTHYLVLAALLFVMGMAGVLL), 36-56 (IVLLMSIELMLNSVNLTFVAF), and 67-87 (IMVFFVMTIAAAEAAVGLALA).

Belongs to the complex I subunit 4L family. In terms of assembly, NDH-1 is composed of 14 different subunits. Subunits NuoA, H, J, K, L, M, N constitute the membrane sector of the complex.

Its subcellular location is the cell inner membrane. The enzyme catalyses a quinone + NADH + 5 H(+)(in) = a quinol + NAD(+) + 4 H(+)(out). NDH-1 shuttles electrons from NADH, via FMN and iron-sulfur (Fe-S) centers, to quinones in the respiratory chain. The immediate electron acceptor for the enzyme in this species is believed to be ubiquinone. Couples the redox reaction to proton translocation (for every two electrons transferred, four hydrogen ions are translocated across the cytoplasmic membrane), and thus conserves the redox energy in a proton gradient. The protein is NADH-quinone oxidoreductase subunit K of Bdellovibrio bacteriovorus (strain ATCC 15356 / DSM 50701 / NCIMB 9529 / HD100).